The sequence spans 325 residues: Serine/threonine-protein kinase CtkA (325 aa).

Residues 21 to 24 (NGNK), K37, Q72, and 88 to 90 (KDF) contribute to the ATP site. Mg(2+) contacts are provided by N160 and D179. D179 provides a ligand contact to ATP. Positions 296–325 (QHKQAHSNPYDNADDLDNSNEYTPTPKRRR) are disordered.

Post-translationally, autophosphorylates on either Thr-3 or Thr-7.

The protein resides in the secreted. It localises to the host cytoplasm. It is found in the host cytosol. The protein localises to the host nucleus. The enzyme catalyses L-seryl-[protein] + ATP = O-phospho-L-seryl-[protein] + ADP + H(+). It carries out the reaction L-threonyl-[protein] + ATP = O-phospho-L-threonyl-[protein] + ADP + H(+). In terms of biological role, virulence factor acting as a pro-inflammatory protein that induces the secretion of the pro-inflammatory cytokines TNF-alpha (tumor necrosis factor-alpha) and IL-8 (interleukin-8) from human macrophages, as well as enhanced translocation of the transcription factor NF-kappa-B complex in macrophages. Is a kinase capable of autophosphorylating itself at a threonine residue near the N-terminus. Also leads to enhanced phosphorylation of the NF-kappa-B p65 subunit (RELA) at 'Ser-276' in human epithelial cancer cells; its kinase activity is required for this enhanced phosphorylation that up-regulates NF-kappa-B activity, but it does not directly phosphorylate this protein. Thus, the kinase activity of CtkA may play an important role in the induction of host inflammatory responses during H.pylori infection. This chain is Serine/threonine-protein kinase CtkA (ctkA), found in Helicobacter pylori (strain J99 / ATCC 700824) (Campylobacter pylori J99).